Here is a 134-residue protein sequence, read N- to C-terminus: Histone H2B (134 aa).

Positions 1–10 are enriched in polar residues; sequence MSDKASTPKK. Disordered regions lie at residues 1–29 and 113–134; these read MSDK…EAKK and VSEG…SKSR. Over residues 12–29 the composition is skewed to basic and acidic residues; that stretch reads ATKDATKPKKVGDEEAKK. Polar residues predominate over residues 125 to 134; sequence GQPTSGSKSR.

The protein belongs to the histone H2B family. The nucleosome is a histone octamer containing two molecules each of H2A, H2B, H3 and H4 assembled in one H3-H4 heterotetramer and two H2A-H2B heterodimers. The octamer wraps approximately 147 bp of DNA.

The protein localises to the nucleus. The protein resides in the chromosome. Core component of nucleosome. Nucleosomes wrap and compact DNA into chromatin, limiting DNA accessibility to the cellular machineries which require DNA as a template. Histones thereby play a central role in transcription regulation, DNA repair, DNA replication and chromosomal stability. DNA accessibility is regulated via a complex set of post-translational modifications of histones, also called histone code, and nucleosome remodeling. The polypeptide is Histone H2B (Entamoeba invadens).